The primary structure comprises 110 residues: Large ribosomal subunit protein uL22 (110 aa).

It belongs to the universal ribosomal protein uL22 family. As to quaternary structure, part of the 50S ribosomal subunit.

Its function is as follows. This protein binds specifically to 23S rRNA; its binding is stimulated by other ribosomal proteins, e.g. L4, L17, and L20. It is important during the early stages of 50S assembly. It makes multiple contacts with different domains of the 23S rRNA in the assembled 50S subunit and ribosome. The globular domain of the protein is located near the polypeptide exit tunnel on the outside of the subunit, while an extended beta-hairpin is found that lines the wall of the exit tunnel in the center of the 70S ribosome. The sequence is that of Large ribosomal subunit protein uL22 from Acinetobacter baumannii (strain ACICU).